An 84-amino-acid polypeptide reads, in one-letter code: Omega-theraphotoxin-Pm1a (84 aa).

Positions 1–21 (MKTSMLAVFVALPLAFVLTAA) are cleaved as a signal peptide. A propeptide spanning residues 22–45 (TEERAHPNELVNSLVELVKLDAER) is cleaved from the precursor. Disulfide bonds link Cys-52-Cys-66, Cys-59-Cys-71, and Cys-65-Cys-78.

It belongs to the neurotoxin 10 (Hwtx-1) family. 41 (Jztx-36) subfamily. In terms of tissue distribution, expressed by the venom gland.

The protein resides in the secreted. Its function is as follows. Omega-conotoxins act at presynaptic membranes, they bind and block voltage-gated calcium channels (Cav). This toxin inhibits barium currents (IBa) mediated by L-type voltage-gated calcium channels Cav1.2/CACNA1C (IC(50)=825 nM) and Cav1.3/CACNA1C (IC(50)=2240 nM). This Pelinobius muticus (King baboon spider) protein is Omega-theraphotoxin-Pm1a.